The following is a 457-amino-acid chain: 5' exonuclease Apollo (457 aa).

A TBM motif is present at residues 425-437 (ELPKQYLLTPLNA).

This sequence belongs to the DNA repair metallo-beta-lactamase (DRMBL) family. In terms of assembly, interacts with TERF2; the interaction is direct.

The protein resides in the chromosome. The protein localises to the telomere. It is found in the nucleus. It catalyses the reaction a beta-lactam + H2O = a substituted beta-amino acid. Functionally, 5'-3' exonuclease that plays a central role in telomere maintenance and protection during S-phase. Participates in the protection of telomeres against non-homologous end-joining (NHEJ)-mediated repair, thereby ensuring that telomeres do not fuse. Plays a key role in telomeric loop (T loop) formation by being recruited by TERF2 at the leading end telomeres and by processing leading-end telomeres immediately after their replication via its exonuclease activity: generates 3' single-stranded overhang at the leading end telomeres avoiding blunt leading-end telomeres that are vulnerable to end-joining reactions and expose the telomere end in a manner that activates the DNA repair pathways. May be required for DNA interstrand cross-link repair. Possesses beta-lactamase activity, catalyzing the hydrolysis of penicillin G and nitrocefin. Exhibits no activity towards other beta-lactam antibiotic classes including cephalosporins (cefotaxime) and carbapenems (imipenem). The chain is 5' exonuclease Apollo (DCLRE1B) from Gallus gallus (Chicken).